Reading from the N-terminus, the 290-residue chain is Cbb3-type cytochrome c oxidase subunit FixP (290 aa).

The helical transmembrane segment at Trp-33–Pro-53 threads the bilayer. Cytochrome c domains are found at residues Leu-109–Ser-198 and Tyr-206–Gly-287. Cys-122, Cys-125, His-126, Met-173, Cys-219, Cys-222, His-223, and Met-264 together coordinate heme c.

It belongs to the CcoP / FixP family. Component of the cbb3-type cytochrome c oxidase at least composed of FixN, FixO, FixQ and FixP. Requires heme c as cofactor.

The protein localises to the cell inner membrane. Its pathway is energy metabolism; oxidative phosphorylation. C-type cytochrome. Part of the cbb3-type cytochrome c oxidase complex. FixP subunit is required for transferring electrons from donor cytochrome c via its heme groups to FixO subunit. From there, electrons are shuttled to the catalytic binuclear center of FixN subunit where oxygen reduction takes place. The complex also functions as a proton pump. The chain is Cbb3-type cytochrome c oxidase subunit FixP from Bradyrhizobium sp. (strain ORS 278).